A 617-amino-acid chain; its full sequence is Protein AsmA (617 aa).

At 1-3 the chain is on the cytoplasmic side; it reads MRR. The helical transmembrane segment at 4–24 threads the bilayer; that stretch reads FLTTLMILLVVLVAGLSALVL. The Periplasmic portion of the chain corresponds to 25 to 617; that stretch reads LVNPNDFRDY…KDVKKLLEKM (593 aa). The span at 302 to 319 shows a compositional bias: polar residues; sequence TANGENGAAQQGQSQSTL. The tract at residues 302 to 321 is disordered; that stretch reads TANGENGAAQQGQSQSTLPR.

Belongs to the AsmA family.

The protein resides in the cell inner membrane. In terms of biological role, could be involved in the assembly of outer membrane proteins. May indirectly influence the assembly of outer membrane proteins, potentially by altering outer membrane fluidity. Inhibits the assembly of mutant forms of outer membrane protein F (OmpF). The chain is Protein AsmA from Escherichia coli (strain K12).